The sequence spans 561 residues: Membrane protein insertase YidC (561 aa).

The next 6 helical transmembrane spans lie at 7–27 (ILIVALAIVSYVMVLKWNQDY), 342–362 (LELTVDYGFLWFIAQPIFWLL), 368–388 (LLGNWGWSIIVLTMLIKGLFF), 438–458 (LGGCLPILVQMPVFLALYWVL), 469–489 (WMLWITDLSIKDPFFILPIIM), and 516–536 (PIIFTFFFLWFPAGLVLYWVV).

It belongs to the OXA1/ALB3/YidC family. Type 1 subfamily. In terms of assembly, interacts with the Sec translocase complex via SecD. Specifically interacts with transmembrane segments of nascent integral membrane proteins during membrane integration.

It is found in the cell inner membrane. Required for the insertion and/or proper folding and/or complex formation of integral membrane proteins into the membrane. Involved in integration of membrane proteins that insert both dependently and independently of the Sec translocase complex, as well as at least some lipoproteins. Aids folding of multispanning membrane proteins. This chain is Membrane protein insertase YidC, found in Pseudomonas entomophila (strain L48).